We begin with the raw amino-acid sequence, 1336 residues long: Putative botulinum-like toxin Wo (1336 aa).

The has protease activity stretch occupies residues 1–476 (MDVLEMFDVN…VAGMQRMVSL (476 aa)). His250 serves as a coordination point for Zn(2+). Glu251 is a catalytic residue. Residues His254 and Glu296 each coordinate Zn(2+).

It belongs to the peptidase M27 family. Requires Zn(2+) as cofactor.

The catalysed reaction is Limited hydrolysis of proteins of the neuroexocytosis apparatus, synaptobrevins, SNAP25 or syntaxin. No detected action on small molecule substrates.. With respect to regulation, inhibited by EDTA and 1,10-phenanthroline. When overexpressed the N-terminus (residues 1-476) cleaves rat synaptobrevin-2/VAMP2 between '89-Trp-|-Trp-90' in vitro. This releases the cytoplasmic domain of VAMP2 from the synaptic vesicle membrane, which would prevent the assembly of the trans-SNARE complex on the membrane and thus prevent vesicle-target membrane fusion and neurotransmitter release. The polypeptide is Putative botulinum-like toxin Wo (Weissella oryzae (strain DSM 25784 / JCM 18191 / LMG 30913 / SG25)).